A 226-amino-acid polypeptide reads, in one-letter code: 3-dehydroquinate dehydratase (226 aa).

3-dehydroquinate-binding positions include 29–31 and Arg-56; that span reads EFR. His-120 acts as the Proton donor/acceptor in catalysis. The active-site Schiff-base intermediate with substrate is Lys-146. Residues Arg-187, Thr-208, and Gln-212 each contribute to the 3-dehydroquinate site.

Belongs to the type-I 3-dehydroquinase family. In terms of assembly, homodimer.

It catalyses the reaction 3-dehydroquinate = 3-dehydroshikimate + H2O. Its pathway is metabolic intermediate biosynthesis; chorismate biosynthesis; chorismate from D-erythrose 4-phosphate and phosphoenolpyruvate: step 3/7. In terms of biological role, involved in the third step of the chorismate pathway, which leads to the biosynthesis of aromatic amino acids. Catalyzes the cis-dehydration of 3-dehydroquinate (DHQ) and introduces the first double bond of the aromatic ring to yield 3-dehydroshikimate. This is 3-dehydroquinate dehydratase from Halobacterium salinarum (strain ATCC 700922 / JCM 11081 / NRC-1) (Halobacterium halobium).